The sequence spans 361 residues: Probable cytosolic iron-sulfur protein assembly protein 1 (361 aa).

WD repeat units follow at residues Ala-10–Gln-49, Thr-56–Leu-105, Gly-120–Glu-160, Asp-167–Ser-206, Gly-213–His-265, Val-280–Ile-319, and His-327–Pro-361.

The protein belongs to the WD repeat CIA1 family. In terms of assembly, interacts with NAR1.

It localises to the cytoplasm. The protein localises to the nucleus. Functionally, essential component of the cytosolic iron-sulfur (Fe/S) protein assembly machinery. Required for the maturation of extramitochondrial Fe/S proteins. The sequence is that of Probable cytosolic iron-sulfur protein assembly protein 1 from Scheffersomyces stipitis (strain ATCC 58785 / CBS 6054 / NBRC 10063 / NRRL Y-11545) (Yeast).